Consider the following 366-residue polypeptide: uncharacterized protein (366 aa).

The OBG-type G domain occupies 64–289; it reads GTVGFIGFPS…LKETMWDYLN (226 aa). Residues 70–77, 116–120, and 247–250 contribute to the GTP site; these read GFPSVGKS, DLPGI, and NKID. The region spanning 289 to 365 is the TGS domain; it reads NLVRVYTRPR…LDEDVVTIVK (77 aa).

Belongs to the TRAFAC class OBG-HflX-like GTPase superfamily. OBG GTPase family.

This is an uncharacterized protein from Schizosaccharomyces pombe (strain 972 / ATCC 24843) (Fission yeast).